The sequence spans 115 residues: Thioredoxin-1 (115 aa).

Residues 2–114 (LKRCNFKNQV…RQKVLEHVSA (113 aa)) enclose the Thioredoxin domain. Active-site nucleophile residues include cysteine 39 and cysteine 42. Cysteine 39 and cysteine 42 are oxidised to a cystine.

Belongs to the thioredoxin family. As to expression, expressed in ASJ and ASI ciliated sensory neurons. Expressed in the intestine (at protein level).

Participates in various redox reactions through the reversible oxidation of its active center dithiol to a disulfide and catalyzes dithiol-disulfide exchange reactions. Shown to facilitate the reduction of insulin disulfide bonds. Might play a role in the reversible nitrosylation of cysteine residues in target proteins, and thereby contributing to the response to intracellular nitric oxide. Shapes the ASJ sensory neuron biphasic response to nitric oxide (NO) exposure; trans-nitrosylation activity might inhibit calcium flux to the cytoplasm in ASJ neurons when exposed to a NO stimulus, whereas de-nitrosylation activity might promote calcium flux when NO is diminished. By regulating the NO-induced ASJ sensory neuron activity, mediates the avoidance response to NO-producing organisms like P.aeruginosa. Positively regulates life span extension under normal and caloric restriction conditions, dauer formation and the oxidative stress response. Contributes to the down-regulation of expression of the insulin-like neuropeptide daf-28 in the ASJ neurons in a redox-independent fashion, thereby promoting dauer formation. Negatively regulates the nuclear localization of the intestinal skn-1 transcription factor in a p38 MAPK pathway-dependent and redox-independent fashion. The sequence is that of Thioredoxin-1 (trx-1) from Caenorhabditis elegans.